The following is a 453-amino-acid chain: MNIVILAAGTGKRMRSALPKVLHPLAGRPLLSHVIDTARTLQPSRLVVVVGHGAEQVKAAVAAPDVQFAVQAEQLGTGHAVRQALPLLDPAQPTLVLYGDVPLTRASTLQRLVDAARDGRYGILTVTLDDPTGYGRIVRDASGFVTRIVEQKDASPEELKIAEINTGIIVTPTAQLSMWLGALKNENAQGEYYLTDVVELAIEAGFEVVTSQPDDEWETLGVNSKAQLAELERIHQRNVADALLVDGVTLADPARVDVRGTLRCGRDVSIDVNCVFEGNVTIADNVTIGANCVIRNASVGAGTRIDAFTHIDGAELGANTVIGPYARLRPGAQLADEAHVGNFVEVKNAVIGHGSKANHLTYIGDADIGARVNIGAGTITCNYDGANKFRTVIEDDVFVGSDTQLVAPVRVGRGVTIAAGTTIWKDVAEGVLALNEKTQTAKSGYVRPVKKKS.

Residues 1 to 225 (MNIVILAAGT…EWETLGVNSK (225 aa)) form a pyrophosphorylase region. Residues 6–9 (LAAG), K20, Q71, 76–77 (GT), 98–100 (YGD), G135, E150, N165, and N223 contribute to the UDP-N-acetyl-alpha-D-glucosamine site. Residue D100 participates in Mg(2+) binding. N223 is a binding site for Mg(2+). The interval 226-246 (AQLAELERIHQRNVADALLVD) is linker. The tract at residues 247-453 (GVTLADPARV…GYVRPVKKKS (207 aa)) is N-acetyltransferase. The UDP-N-acetyl-alpha-D-glucosamine site is built by R329 and K347. H359 functions as the Proton acceptor in the catalytic mechanism. Y362 and N373 together coordinate UDP-N-acetyl-alpha-D-glucosamine. Acetyl-CoA is bound by residues A376, 382 to 383 (NY), S401, and A419.

In the N-terminal section; belongs to the N-acetylglucosamine-1-phosphate uridyltransferase family. It in the C-terminal section; belongs to the transferase hexapeptide repeat family. As to quaternary structure, homotrimer. Mg(2+) is required as a cofactor.

The protein resides in the cytoplasm. The enzyme catalyses alpha-D-glucosamine 1-phosphate + acetyl-CoA = N-acetyl-alpha-D-glucosamine 1-phosphate + CoA + H(+). The catalysed reaction is N-acetyl-alpha-D-glucosamine 1-phosphate + UTP + H(+) = UDP-N-acetyl-alpha-D-glucosamine + diphosphate. It functions in the pathway nucleotide-sugar biosynthesis; UDP-N-acetyl-alpha-D-glucosamine biosynthesis; N-acetyl-alpha-D-glucosamine 1-phosphate from alpha-D-glucosamine 6-phosphate (route II): step 2/2. It participates in nucleotide-sugar biosynthesis; UDP-N-acetyl-alpha-D-glucosamine biosynthesis; UDP-N-acetyl-alpha-D-glucosamine from N-acetyl-alpha-D-glucosamine 1-phosphate: step 1/1. The protein operates within bacterial outer membrane biogenesis; LPS lipid A biosynthesis. Its function is as follows. Catalyzes the last two sequential reactions in the de novo biosynthetic pathway for UDP-N-acetylglucosamine (UDP-GlcNAc). The C-terminal domain catalyzes the transfer of acetyl group from acetyl coenzyme A to glucosamine-1-phosphate (GlcN-1-P) to produce N-acetylglucosamine-1-phosphate (GlcNAc-1-P), which is converted into UDP-GlcNAc by the transfer of uridine 5-monophosphate (from uridine 5-triphosphate), a reaction catalyzed by the N-terminal domain. The polypeptide is Bifunctional protein GlmU (Burkholderia orbicola (strain AU 1054)).